Consider the following 123-residue polypeptide: Large ribosomal subunit protein uL29 (123 aa).

The interval 84–123 (RPKKTRAMRRRLNKHEEGLKTKKQQRKERLYPPRKYAVKA) is disordered. Basic residues predominate over residues 86–96 (KKTRAMRRRLN).

It belongs to the universal ribosomal protein uL29 family. In terms of assembly, component of the large ribosomal subunit.

The protein resides in the cytoplasm. Component of the large ribosomal subunit. The ribosome is a large ribonucleoprotein complex responsible for the synthesis of proteins in the cell. The chain is Large ribosomal subunit protein uL29 (RPL35) from Ophiophagus hannah (King cobra).